Reading from the N-terminus, the 843-residue chain is MPLSYQHFRRLLLLDNEAGPLEEELPRLADEDLNHRVAEDLNLQLPNVSIPWTHKVGNFTGLYSSTVPVFNPDWLTPSFPDIHLHQDLIQKCEQFVGPLTKNEVRRLKLIMPARFYPKVTKYFPLDKGIKPYYPEHVVNHYFKTRHYLHTLWKAGILYKRESTHSASFCGSPYSWEQELQHGSTSLNGEKGHGTESFCAQSSGILSRPPVGSTIQSKFQQSRLGLQHKQGQLANGKQGRSGRLWSRVHTPTRWPSGVEPSGTGHSDNLATRSTSRFHQSEVRKETNPSLSTSKGHTSTGHAVELNTVPPSTVGSESKGSVSSCWWLQFRNTEPCSDYCLSHIINLLEDWGPCYEHGEHHIRTPRTPSRVTGGVFLVDKNPHNTTESRLVVDFSQFSRGTTRVSWPKFAVPNLQSLTNLLSSNLSWLSLDVSAAFYHLPLHPAAMPHLLVGSSGLSRYVARVSSTSRIYNHQHGSLQNLHHSCSRNLYVSLLLLYQTFGRKLHLYSHPIILGFRKIPMGVGLSPFLLAQFTSAICSVVRRAFPHCLAFSYMDDLVLGAKSVQHLESLYTAVTNFLLSVGIHLNTAKTKWWGYSLHFMGYIIGSWGTLPQEHIVQKIKDCFRKLPVNRPIDWKVCQRIVGLLGFAAPFTQCGYPALMPLYACITAKQAFVFSPTYKAFLCKQYMNLYPVARQRPGLCQVFADATPTGWGLAIGHQRMRGTFVAPLPIHTAELLAACFARSRSGADIIGTDNSVVLSRKYTSFPWLLGCAANWILRGTSFVYVPSALNPADDPSRGRLGLCRPLLRLPFRPTTGRTSLYADSPPVPSHLPARVHFASPLHVAWRPP.

Positions 1 to 177 (MPLSYQHFRR…FCGSPYSWEQ (177 aa)) are terminal protein domain (TP). A spacer region spans residues 178-346 (ELQHGSTSLN…YCLSHIINLL (169 aa)). The segment at 228-316 (KQGQLANGKQ…VPPSTVGSES (89 aa)) is disordered. 3 stretches are compositionally biased toward polar residues: residues 262 to 276 (TGHSDNLATRSTSRF), 286 to 299 (NPSLSTSKGHTSTG), and 307 to 316 (VPPSTVGSES). The tract at residues 347–690 (EDWGPCYEHG…YMNLYPVARQ (344 aa)) is polymerase/reverse transcriptase domain (RT). The 244-residue stretch at 357–600 (EHHIRTPRTP…YSLHFMGYII (244 aa)) folds into the Reverse transcriptase domain. Mg(2+) contacts are provided by D429, D551, and D552.

Belongs to the hepadnaviridae P protein family.

The catalysed reaction is DNA(n) + a 2'-deoxyribonucleoside 5'-triphosphate = DNA(n+1) + diphosphate. It carries out the reaction Endonucleolytic cleavage to 5'-phosphomonoester.. With respect to regulation, activated by host HSP70 and HSP40 in vitro to be able to bind the epsilon loop of the pgRNA. Because deletion of the RNase H region renders the protein partly chaperone-independent, the chaperones may be needed indirectly to relieve occlusion of the RNA-binding site by this domain. Inhibited by several reverse-transcriptase inhibitors: Lamivudine, Adefovir and Entecavir. Functionally, multifunctional enzyme that converts the viral RNA genome into dsDNA in viral cytoplasmic capsids. This enzyme displays a DNA polymerase activity that can copy either DNA or RNA templates, and a ribonuclease H (RNase H) activity that cleaves the RNA strand of RNA-DNA heteroduplexes in a partially processive 3'- to 5'-endonucleasic mode. Neo-synthesized pregenomic RNA (pgRNA) are encapsidated together with the P protein, and reverse-transcribed inside the nucleocapsid. Initiation of reverse-transcription occurs first by binding the epsilon loop on the pgRNA genome, and is initiated by protein priming, thereby the 5'-end of (-)DNA is covalently linked to P protein. Partial (+)DNA is synthesized from the (-)DNA template and generates the relaxed circular DNA (RC-DNA) genome. After budding and infection, the RC-DNA migrates in the nucleus, and is converted into a plasmid-like covalently closed circular DNA (cccDNA). The activity of P protein does not seem to be necessary for cccDNA generation, and is presumably released from (+)DNA by host nuclear DNA repair machinery. The sequence is that of Protein P from Homo sapiens (Human).